The following is a 224-amino-acid chain: Inhibitor of apoptosis protein (224 aa).

The BIR repeat unit spans residues 29 to 92 (VDARNQSFAI…AFWSRNCGFM (64 aa)). Residues C62, C65, H82, and C89 each contribute to the Zn(2+) site.

It belongs to the asfivirus IAP family. In terms of assembly, interacts with subunit p17 of host CASP3.

The protein resides in the host cytoplasm. The protein localises to the virion. In terms of biological role, prevents apoptosis of host cell by inhibiting caspase-3/CASP3 activation to promote the viral replication. Also induces the activation of host NF-kappaB. The sequence is that of Inhibitor of apoptosis protein (p27) from African swine fever virus (isolate Tick/South Africa/Wildebeeslaagte M1/1996) (ASFV).